The sequence spans 555 residues: Protection of telomeres protein 1 (555 aa).

The protein belongs to the telombin family. In terms of assembly, self-associates. Interacts with ccq1, poz1 and tpz1.

It is found in the nucleus. The protein resides in the chromosome. Its subcellular location is the telomere. Its function is as follows. Single-stranded telomeric DNA-binding protein that is required to protect the 3'-end telomeric overhang. It binds the consensus sequence 5'-GGTTAC-3'. Regulates telomerase and telomere length. In Schizosaccharomyces pombe (strain 972 / ATCC 24843) (Fission yeast), this protein is Protection of telomeres protein 1 (pot1).